The following is a 352-amino-acid chain: Quinolinate synthase (352 aa).

Iminosuccinate contacts are provided by His-48 and Ser-69. Position 114 (Cys-114) interacts with [4Fe-4S] cluster. Residues 140–142 and Ser-157 each bind iminosuccinate; that span reads YAN. A [4Fe-4S] cluster-binding site is contributed by Cys-201. Iminosuccinate contacts are provided by residues 227 to 229 and Thr-244; that span reads HPE. Cys-298 contacts [4Fe-4S] cluster.

The protein belongs to the quinolinate synthase family. Type 1 subfamily. Requires [4Fe-4S] cluster as cofactor.

It is found in the cytoplasm. It catalyses the reaction iminosuccinate + dihydroxyacetone phosphate = quinolinate + phosphate + 2 H2O + H(+). It functions in the pathway cofactor biosynthesis; NAD(+) biosynthesis; quinolinate from iminoaspartate: step 1/1. Functionally, catalyzes the condensation of iminoaspartate with dihydroxyacetone phosphate to form quinolinate. This chain is Quinolinate synthase, found in Pseudomonas putida (strain ATCC 700007 / DSM 6899 / JCM 31910 / BCRC 17059 / LMG 24140 / F1).